A 328-amino-acid polypeptide reads, in one-letter code: Phosphate acyltransferase (328 aa).

This sequence belongs to the PlsX family. Homodimer. Probably interacts with PlsY.

Its subcellular location is the cytoplasm. The enzyme catalyses a fatty acyl-[ACP] + phosphate = an acyl phosphate + holo-[ACP]. The protein operates within lipid metabolism; phospholipid metabolism. Catalyzes the reversible formation of acyl-phosphate (acyl-PO(4)) from acyl-[acyl-carrier-protein] (acyl-ACP). This enzyme utilizes acyl-ACP as fatty acyl donor, but not acyl-CoA. The chain is Phosphate acyltransferase from Staphylococcus aureus (strain MRSA252).